The sequence spans 977 residues: Pro-apoptotic serine protease NMA111 (977 aa).

Residues 1–36 (MTIQAHKRTLSEVSTSSVGQLKRREGYTEDYTDEGS) are disordered. Positions 64–254 (VVSVHFAQVA…LPLDRILRAL (191 aa)) are serine protease. Active-site charge relay system residues include His-102, Asp-133, and Ser-216. 2 PDZ domains span residues 271-356 (QWLL…LVVQ) and 749-835 (SVLQ…VRKG).

The protein belongs to the peptidase S1C family.

The protein localises to the nucleus. In terms of biological role, nuclear serine protease which mediates apoptosis. The sequence is that of Pro-apoptotic serine protease NMA111 (NMA111) from Eremothecium gossypii (strain ATCC 10895 / CBS 109.51 / FGSC 9923 / NRRL Y-1056) (Yeast).